We begin with the raw amino-acid sequence, 213 residues long: Sclerostin (213 aa).

Positions 1-23 (MQLPLALCLVCLLVHAAFRVVEG) are cleaved as a signal peptide. The tract at residues 41-71 (GEYPEPPPELENNKTMNRAENGGRPPHHPFE) is disordered. N53 is a glycosylation site (N-linked (GlcNAc...) asparagine). Intrachain disulfides connect C80–C134, C94–C148, C105–C165, and C109–C167. The 91-residue stretch at 82–172 (ELHFTRYVTD…ASCKCKRLTR (91 aa)) folds into the CTCK domain. N-linked (GlcNAc...) asparagine glycosylation occurs at N175. Residues 178 to 213 (ELKDFGPEAARPQKGRKPRPRARGAKANQAELENAY) form a disordered region. Positions 190–201 (QKGRKPRPRARG) are enriched in basic residues.

The protein belongs to the sclerostin family. Interacts with LRP4 (via the extracellular domain); the interaction facilitates the inhibition of Wnt signaling. Interacts with LRP5 (via the first two YWTD-EGF repeat domains); the interaction inhibits Wnt-mediated signaling. Interacts with LRP6.

The protein resides in the secreted. It localises to the extracellular space. It is found in the extracellular matrix. Functionally, negative regulator of bone growth that acts through inhibition of Wnt signaling and bone formation. The sequence is that of Sclerostin from Chlorocebus aethiops (Green monkey).